We begin with the raw amino-acid sequence, 148 residues long: Cdc42 effector protein 5 (148 aa).

Disordered stretches follow at residues 1–89 and 111–148; these read MPVL…DPLL and RPEAAAAKPDAEPRPGTQPPQARCRPNADLELNDVIGL. The CRIB domain occupies 23 to 37; the sequence is ISAPLGDFRHTLHVG. Position 38 is an omega-N-methylarginine (arginine 38). Residues 55-76 show a composition bias toward pro residues; sequence GPPPEPRAPPAGAPRSPPPPAV. Over residues 77-87 the composition is skewed to low complexity; it reads PQSAAPSPADP.

This sequence belongs to the BORG/CEP family. Interacts with CDC42, in a GTP-dependent manner, and with SEPT7.

It localises to the endomembrane system. It is found in the cytoplasm. The protein resides in the cytoskeleton. Functionally, probably involved in the organization of the actin cytoskeleton. May act downstream of CDC42 to induce actin filament assembly leading to cell shape changes. Induces pseudopodia formation in fibroblasts. Inhibits MAPK8 independently of CDC42 binding. Controls septin organization and this effect is negatively regulated by CDC42. The chain is Cdc42 effector protein 5 (CDC42EP5) from Homo sapiens (Human).